A 282-amino-acid chain; its full sequence is Biotin synthase (282 aa).

The region spanning 1 to 228 is the Radical SAM core domain; sequence MQEIFLCSIS…NARLMAAGGR (228 aa). Residues Cys-17, Cys-21, and Cys-24 each contribute to the [4Fe-4S] cluster site. Residues Cys-61, Cys-96, Cys-154, and Arg-221 each coordinate [2Fe-2S] cluster.

It belongs to the radical SAM superfamily. Biotin synthase family. In terms of assembly, homodimer. The cofactor is [4Fe-4S] cluster. Requires [2Fe-2S] cluster as cofactor.

It carries out the reaction (4R,5S)-dethiobiotin + (sulfur carrier)-SH + 2 reduced [2Fe-2S]-[ferredoxin] + 2 S-adenosyl-L-methionine = (sulfur carrier)-H + biotin + 2 5'-deoxyadenosine + 2 L-methionine + 2 oxidized [2Fe-2S]-[ferredoxin]. The protein operates within cofactor biosynthesis; biotin biosynthesis; biotin from 7,8-diaminononanoate: step 2/2. Its function is as follows. Catalyzes the conversion of dethiobiotin (DTB) to biotin by the insertion of a sulfur atom into dethiobiotin via a radical-based mechanism. This chain is Biotin synthase, found in Helicobacter acinonychis (strain Sheeba).